The primary structure comprises 475 residues: Ribulose bisphosphate carboxylase large chain (475 aa).

Positions 1 to 2 (MA) are excised as a propeptide. Residue proline 3 is modified to N-acetylproline. Lysine 14 carries the post-translational modification N6,N6,N6-trimethyllysine. Positions 123 and 173 each coordinate substrate. Lysine 175 acts as the Proton acceptor in catalysis. Lysine 177 serves as a coordination point for substrate. Residues lysine 201, aspartate 203, and glutamate 204 each coordinate Mg(2+). N6-carboxylysine is present on lysine 201. Histidine 294 acts as the Proton acceptor in catalysis. 3 residues coordinate substrate: arginine 295, histidine 327, and serine 379.

Belongs to the RuBisCO large chain family. Type I subfamily. In terms of assembly, heterohexadecamer of 8 large chains and 8 small chains; disulfide-linked. The disulfide link is formed within the large subunit homodimers. Mg(2+) serves as cofactor. Post-translationally, the disulfide bond which can form in the large chain dimeric partners within the hexadecamer appears to be associated with oxidative stress and protein turnover.

The protein localises to the plastid. It localises to the chloroplast. The enzyme catalyses 2 (2R)-3-phosphoglycerate + 2 H(+) = D-ribulose 1,5-bisphosphate + CO2 + H2O. It catalyses the reaction D-ribulose 1,5-bisphosphate + O2 = 2-phosphoglycolate + (2R)-3-phosphoglycerate + 2 H(+). In terms of biological role, ruBisCO catalyzes two reactions: the carboxylation of D-ribulose 1,5-bisphosphate, the primary event in carbon dioxide fixation, as well as the oxidative fragmentation of the pentose substrate in the photorespiration process. Both reactions occur simultaneously and in competition at the same active site. This is Ribulose bisphosphate carboxylase large chain from Bryopsis maxima (Green alga).